We begin with the raw amino-acid sequence, 266 residues long: 4-hydroxy-tetrahydrodipicolinate reductase (266 aa).

Position 10–15 (10–15 (GPRGRM)) interacts with NAD(+). Position 38 (lysine 38) interacts with NADP(+). NAD(+) is bound by residues 99–101 (GTT) and 125–128 (APNF). Histidine 155 (proton donor/acceptor) is an active-site residue. A (S)-2,3,4,5-tetrahydrodipicolinate-binding site is contributed by histidine 156. Lysine 159 functions as the Proton donor in the catalytic mechanism. 165 to 166 (GT) provides a ligand contact to (S)-2,3,4,5-tetrahydrodipicolinate.

Belongs to the DapB family.

It localises to the cytoplasm. It catalyses the reaction (S)-2,3,4,5-tetrahydrodipicolinate + NAD(+) + H2O = (2S,4S)-4-hydroxy-2,3,4,5-tetrahydrodipicolinate + NADH + H(+). The catalysed reaction is (S)-2,3,4,5-tetrahydrodipicolinate + NADP(+) + H2O = (2S,4S)-4-hydroxy-2,3,4,5-tetrahydrodipicolinate + NADPH + H(+). It participates in amino-acid biosynthesis; L-lysine biosynthesis via DAP pathway; (S)-tetrahydrodipicolinate from L-aspartate: step 4/4. Functionally, catalyzes the conversion of 4-hydroxy-tetrahydrodipicolinate (HTPA) to tetrahydrodipicolinate. The polypeptide is 4-hydroxy-tetrahydrodipicolinate reductase (Bacillus thuringiensis subsp. konkukian (strain 97-27)).